The primary structure comprises 1134 residues: Protocadherin 18 (1134 aa).

The first 27 residues, 1-27 (MHQMNTKMHFRFALALLMAFFSHDVLA), serve as a signal peptide directing secretion. Cadherin domains lie at 28-137 (KNLK…SPQF), 138-246 (SRPV…SPAF), 247-354 (EQPS…KPEI), 361-465 (PGKE…PPRF), 466-576 (QRSR…VPVV), and 582-688 (HNNT…STAM). At 28-699 (KNLKYRIYEE…SVSRASLDVS (672 aa)) the chain is on the extracellular side. Asn103 carries an N-linked (GlcNAc...) asparagine glycan. The N-linked (GlcNAc...) asparagine glycan is linked to Asn269. An N-linked (GlcNAc...) asparagine glycan is attached at Asn559. Residues 700–720 (MIIIISLGAICAVLLVIMVLF) traverse the membrane as a helical segment. The Cytoplasmic segment spans residues 721–1134 (ATRCNREKKD…NKLLQDVRQS (414 aa)). Disordered stretches follow at residues 769–800 (LPIRSHHRSSPSSSPTLERGQMGSRQSHNSHQ), 868–888 (SLKDSGRGDSEAGDSDYDLGR), 941–1004 (DYRS…SSLL), and 1022–1083 (FSEC…PSSK). Residues 791–800 (GSRQSHNSHQ) show a composition bias toward polar residues. Positions 868–877 (SLKDSGRGDS) are enriched in basic and acidic residues. An interaction with DAB1 region spans residues 892 to 1134 (IDRLLGEGFS…NKLLQDVRQS (243 aa)). Positions 1027-1038 (EGDRSNSLERRK) are enriched in basic and acidic residues. Over residues 1059–1082 (THFQNPTSSSGTPLGTHSSVQPSS) the composition is skewed to polar residues.

Interacts with DAB1. Predominantly expressed in kidney and lung.

The protein resides in the cell membrane. In terms of biological role, potential calcium-dependent cell-adhesion protein. This is Protocadherin 18 (Pcdh18) from Mus musculus (Mouse).